The chain runs to 176 residues: Shikimate kinase (176 aa).

Residue 10–15 participates in ATP binding; that stretch reads TSGKSS. Serine 14 contacts Mg(2+). Residues aspartate 32, glycine 81, and arginine 138 each coordinate substrate.

Belongs to the shikimate kinase family. As to quaternary structure, monomer. Mg(2+) serves as cofactor.

Its subcellular location is the cytoplasm. It carries out the reaction shikimate + ATP = 3-phosphoshikimate + ADP + H(+). It participates in metabolic intermediate biosynthesis; chorismate biosynthesis; chorismate from D-erythrose 4-phosphate and phosphoenolpyruvate: step 5/7. Functionally, catalyzes the specific phosphorylation of the 3-hydroxyl group of shikimic acid using ATP as a cosubstrate. In Chlamydia pneumoniae (Chlamydophila pneumoniae), this protein is Shikimate kinase.